A 576-amino-acid polypeptide reads, in one-letter code: Formate--tetrahydrofolate ligase 2 (576 aa).

69 to 76 (TPLGEGKT) contributes to the ATP binding site.

This sequence belongs to the formate--tetrahydrofolate ligase family.

The catalysed reaction is (6S)-5,6,7,8-tetrahydrofolate + formate + ATP = (6R)-10-formyltetrahydrofolate + ADP + phosphate. Its pathway is one-carbon metabolism; tetrahydrofolate interconversion. The sequence is that of Formate--tetrahydrofolate ligase 2 from Rubrobacter xylanophilus (strain DSM 9941 / JCM 11954 / NBRC 16129 / PRD-1).